Reading from the N-terminus, the 744-residue chain is Sorting nexin MVP1 (744 aa).

3 disordered regions span residues 1 to 40 (MNSN…ATTT), 218 to 252 (NRSI…GGGG), and 273 to 299 (SRSV…GSGT). 2 stretches are compositionally biased toward polar residues: residues 26 to 40 (TSIN…ATTT) and 218 to 243 (NRSI…STTI). Residues 283-297 (QGGGGGSGGGSGSGS) show a composition bias toward gly residues. Residues 326 to 444 (GIDLIKIKEV…SFLTVPTDLT (119 aa)) enclose the PX domain. 4 residues coordinate a 1,2-diacyl-sn-glycero-3-phospho-(1D-myo-inositol-3-phosphate): Arg-369, Ser-371, Lys-395, and Arg-410.

It belongs to the sorting nexin family.

It localises to the cytoplasm. The protein localises to the membrane. Its function is as follows. Required for vacuolar protein sorting. The protein is Sorting nexin MVP1 (MVP1) of Candida albicans (strain SC5314 / ATCC MYA-2876) (Yeast).